Reading from the N-terminus, the 468-residue chain is ATP synthase subunit beta (468 aa).

Residue G148–T155 coordinates ATP.

Belongs to the ATPase alpha/beta chains family. In terms of assembly, F-type ATPases have 2 components, CF(1) - the catalytic core - and CF(0) - the membrane proton channel. CF(1) has five subunits: alpha(3), beta(3), gamma(1), delta(1), epsilon(1). CF(0) has three main subunits: a(1), b(2) and c(9-12). The alpha and beta chains form an alternating ring which encloses part of the gamma chain. CF(1) is attached to CF(0) by a central stalk formed by the gamma and epsilon chains, while a peripheral stalk is formed by the delta and b chains.

The protein resides in the cell inner membrane. The enzyme catalyses ATP + H2O + 4 H(+)(in) = ADP + phosphate + 5 H(+)(out). Its function is as follows. Produces ATP from ADP in the presence of a proton gradient across the membrane. The catalytic sites are hosted primarily by the beta subunits. In Xanthomonas campestris pv. campestris (strain B100), this protein is ATP synthase subunit beta.